The chain runs to 395 residues: FAD-dependent urate hydroxylase (395 aa).

FAD-binding positions include glycine 11, 30-31, serine 43, and methionine 125; that span reads ER. Substrate contacts are provided by residues asparagine 180, arginine 206, and 218 to 220; that span reads YFF. FAD contacts are provided by residues aspartate 287 and 297-301; that span reads GQGGC.

Belongs to the FAD-dependent urate hydroxylase family. Monomer. FAD serves as cofactor.

The enzyme catalyses urate + NADH + O2 + H(+) = 5-hydroxyisourate + NAD(+) + H2O. It participates in purine metabolism; urate degradation. Catalyzes the hydroxylation of urate to 5-hydroxyisourate (HIU). Is likely to be involved in the urate degradation pathway to allantoin. Prefers NADH over NADPH as the electron donor. The protein is FAD-dependent urate hydroxylase of Mycolicibacterium vanbaalenii (strain DSM 7251 / JCM 13017 / BCRC 16820 / KCTC 9966 / NRRL B-24157 / PYR-1) (Mycobacterium vanbaalenii).